Reading from the N-terminus, the 140-residue chain is uncharacterized protein (140 aa).

Over residues Met1–Gly15 the composition is skewed to basic and acidic residues. The tract at residues Met1–Gly34 is disordered.

This is an uncharacterized protein from Gallus gallus (Chicken).